We begin with the raw amino-acid sequence, 458 residues long: MSITKEFDTITAISTPLGEGAIGIVRLSGTDALAIAQSVFKGKNLEQVASHTINYGHIIDPNTGTIVDEVMVSVMLAPKTFTRENVVEINTHGGIAVTNEILQLLIRQGARMAEPGEFTKRAFLNGRVDLTQAEAVMDIIRAKTDKAMTIAVKQLDGSLSQLINDTRQEILNTLAQVEVNIDYPEYDDVEEMTTALLREKTQEFQSLLENLLRTAKRGKILREGLSTAIIGRPNVGKSSLLNNLLREDKAIVTDIAGTTRDVIEEYVNIKGVPLKLVDTAGIRETDDLVEQIGVERSKKALQEADLVLLVLNASEKLTDQDRALLNLSQDSNRIILLNKTDLEQKIELEQLPADLISISVLTNQNINLIEDRINQLFFDNAGLVEQDATYLSNARHISLIEKAVQSLEAVNDGLALGMPVDLLQVDLTRTWEILGEITGDAAPDELITQLFSQFCLGK.

The (6S)-5-formyl-5,6,7,8-tetrahydrofolate site is built by Arg26, Glu88, and Arg127. In terms of domain architecture, TrmE-type G spans 224-378 (GLSTAIIGRP…IEDRINQLFF (155 aa)). K(+) is bound at residue Asn234. GTP is bound by residues 234–239 (NVGKSS), 253–259 (TDIAGTT), and 278–281 (DTAG). Ser238 provides a ligand contact to Mg(2+). Positions 253, 255, and 258 each coordinate K(+). Thr259 contacts Mg(2+). Lys458 lines the (6S)-5-formyl-5,6,7,8-tetrahydrofolate pocket.

It belongs to the TRAFAC class TrmE-Era-EngA-EngB-Septin-like GTPase superfamily. TrmE GTPase family. In terms of assembly, homodimer. Heterotetramer of two MnmE and two MnmG subunits. The cofactor is K(+).

Its subcellular location is the cytoplasm. Exhibits a very high intrinsic GTPase hydrolysis rate. Involved in the addition of a carboxymethylaminomethyl (cmnm) group at the wobble position (U34) of certain tRNAs, forming tRNA-cmnm(5)s(2)U34. This Streptococcus pyogenes serotype M4 (strain MGAS10750) protein is tRNA modification GTPase MnmE.